The following is a 79-amino-acid chain: MSDIEARVKKIIAEQLGVAEAEVTSEKAFVADLGADSLDTVELVMALEDEFGIEIPDEEAEKITTVQLAIDYAKNNVKA.

In terms of domain architecture, Carrier spans 2 to 77 (SDIEARVKKI…LAIDYAKNNV (76 aa)). S37 carries the post-translational modification O-(pantetheine 4'-phosphoryl)serine.

The protein belongs to the acyl carrier protein (ACP) family. In terms of processing, 4'-phosphopantetheine is transferred from CoA to a specific serine of apo-ACP by AcpS. This modification is essential for activity because fatty acids are bound in thioester linkage to the sulfhydryl of the prosthetic group.

The protein localises to the cytoplasm. It participates in lipid metabolism; fatty acid biosynthesis. Functionally, carrier of the growing fatty acid chain in fatty acid biosynthesis. In Leptothrix cholodnii (strain ATCC 51168 / LMG 8142 / SP-6) (Leptothrix discophora (strain SP-6)), this protein is Acyl carrier protein.